A 314-amino-acid chain; its full sequence is tRNA selenocysteine 1-associated protein 1 (314 aa).

2 consecutive RRM domains span residues 2-85 (NSLW…RSNY) and 94-173 (FSLF…LASS).

It belongs to the RRM TRSPAP family.

The protein resides in the nucleus. It is found in the cytoplasm. Functionally, involved in the early steps of selenocysteine biosynthesis and tRNA(Sec) charging to the later steps resulting in the cotranslational incorporation of selenocysteine into selenoproteins. The sequence is that of tRNA selenocysteine 1-associated protein 1 from Danio rerio (Zebrafish).